The chain runs to 304 residues: Sulfate adenylyltransferase subunit 2 2 (304 aa).

The protein belongs to the PAPS reductase family. CysD subfamily. As to quaternary structure, heterodimer composed of CysD, the smaller subunit, and CysN.

The catalysed reaction is sulfate + ATP + H(+) = adenosine 5'-phosphosulfate + diphosphate. Its pathway is sulfur metabolism; hydrogen sulfide biosynthesis; sulfite from sulfate: step 1/3. In terms of biological role, with CysN forms the ATP sulfurylase (ATPS) that catalyzes the adenylation of sulfate producing adenosine 5'-phosphosulfate (APS) and diphosphate, the first enzymatic step in sulfur assimilation pathway. APS synthesis involves the formation of a high-energy phosphoric-sulfuric acid anhydride bond driven by GTP hydrolysis by CysN coupled to ATP hydrolysis by CysD. The sequence is that of Sulfate adenylyltransferase subunit 2 2 from Marinobacter nauticus (strain ATCC 700491 / DSM 11845 / VT8) (Marinobacter aquaeolei).